The primary structure comprises 176 residues: Inner membrane protein p54 (176 aa).

The chain crosses the membrane as a helical span at residues 32–52 (YTILIAIVVLIIIIIVLIYLF). The disordered stretch occupies residues 82–176 (VTPQPGIAKP…YTHKDLENSL (95 aa)). Residues 123 to 154 (GMAAGGPAAASAPAHPAELYTTATTQNTASQT) show a composition bias toward low complexity. The interval 142–154 (YTTATTQNTASQT) is interaction with host DYNLL1.

The protein belongs to the asfivirus envelope protein p54 family. In terms of assembly, interacts with the host light chain cytoplasmic dynein DYNLL1; this interaction is critical for intracellular microtubule-dependent virus transport toward viral factories.

It localises to the virion membrane. Its subcellular location is the host cytoplasm. The protein localises to the host cytoskeleton. The protein resides in the host endoplasmic reticulum membrane. In terms of biological role, inner envelope protein involved, through its interaction with host dynein, in the intracellular microtubule-dependent transport of viral capsid toward viral factories. Seems to induce caspase-3 activation and apoptosis. Plays a role in virion morphogenesis by recruiting and transforming the host ER membranes into the precursors of the viral envelope. Involved in virus attachment to the host cell. This African swine fever virus (isolate Tick/Malawi/Lil 20-1/1983) (ASFV) protein is Inner membrane protein p54.